A 379-amino-acid chain; its full sequence is Cobalt-precorrin-5B C(1)-methyltransferase (379 aa).

Belongs to the CbiD family.

It carries out the reaction Co-precorrin-5B + S-adenosyl-L-methionine = Co-precorrin-6A + S-adenosyl-L-homocysteine. The protein operates within cofactor biosynthesis; adenosylcobalamin biosynthesis; cob(II)yrinate a,c-diamide from sirohydrochlorin (anaerobic route): step 6/10. In terms of biological role, catalyzes the methylation of C-1 in cobalt-precorrin-5B to form cobalt-precorrin-6A. The polypeptide is Cobalt-precorrin-5B C(1)-methyltransferase (Salmonella paratyphi B (strain ATCC BAA-1250 / SPB7)).